Reading from the N-terminus, the 419-residue chain is Acyl transferase 9 (419 aa).

Catalysis depends on proton acceptor residues H161 and D362.

It belongs to the plant acyltransferase family.

In terms of biological role, involved in the incorporation of ferulate into the cell wall. May act as arabinoxylan feruloyl transferase. In Oryza sativa subsp. japonica (Rice), this protein is Acyl transferase 9.